The sequence spans 223 residues: uncharacterized protein (223 aa).

The disordered stretch occupies residues 40 to 70 (GSKRLKPAKFGTEGKERVEQRTERQRTGSSK). A compositionally biased stretch (basic and acidic residues) spans 51 to 70 (TEGKERVEQRTERQRTGSSK).

This is an uncharacterized protein from Homo sapiens (Human).